Reading from the N-terminus, the 407-residue chain is Tyrosine--tRNA ligase (407 aa).

Y35 lines the L-tyrosine pocket. The short motif at 40-49 (PTADSLHVGH) is the 'HIGH' region element. L-tyrosine contacts are provided by Y168 and Q172. Positions 228-232 (KMGKT) match the 'KMSKS' region motif. Residue K231 participates in ATP binding. Residues 341–405 (NPLVDLLAKC…RGKKNFNRIV (65 aa)) form the S4 RNA-binding domain.

Belongs to the class-I aminoacyl-tRNA synthetase family. TyrS type 1 subfamily. Homodimer.

Its subcellular location is the cytoplasm. The catalysed reaction is tRNA(Tyr) + L-tyrosine + ATP = L-tyrosyl-tRNA(Tyr) + AMP + diphosphate + H(+). Functionally, catalyzes the attachment of tyrosine to tRNA(Tyr) in a two-step reaction: tyrosine is first activated by ATP to form Tyr-AMP and then transferred to the acceptor end of tRNA(Tyr). The chain is Tyrosine--tRNA ligase from Clostridium botulinum (strain 657 / Type Ba4).